A 347-amino-acid chain; its full sequence is MITERQQNILRLIIQNYTNTGLPVGSKKLMEDGIASSSATIRNDMKALEEYGLLAKTHSSSGRIPSMAGYRYYVDHLLQPTQVEENELRRIRQSFGKEFHEINDIIRQSAEILSELTSYTAFSLGPEVKERKLTGFRMVPLNDRQVLAIIVTDKGNVENQVFAIPAAVSSQDLEKMTQIINDKLVGQPLLTVYHRLRTEIPMILHRYFQTPEGMMNLFDEMLGHAFEEKVFVGGRMNLLDFGIKQDIEQLKSVYSFMQNSDELTHLLNGSATTENPIVFRIGSEIGNNLLEDMSMITATYEVSGHGKGTIALLGPTSMPYSKIFGLVDTFRHELASQLGDYYRFLGN.

The protein belongs to the HrcA family.

Its function is as follows. Negative regulator of class I heat shock genes (grpE-dnaK-dnaJ and groELS operons). Prevents heat-shock induction of these operons. This Enterococcus faecalis (strain ATCC 700802 / V583) protein is Heat-inducible transcription repressor HrcA.